Reading from the N-terminus, the 632-residue chain is Tail spike protein (632 aa).

A Peptidase S74 domain is found at 505–630; the sequence is SDARCKTEPL…KRMQEALAAL (126 aa).

In terms of assembly, homotrimer. In terms of processing, proteolytic cleavage and release of the chaperone in the host cytosol stabilizes the folded protein. The cleavage gives rise to the mature tail spike protein but is not essential for catalytic activity.

It is found in the virion. In terms of biological role, functions as a receptor binding protein (RBP) and probably mediates the attachment to the host capsular exopolysaccharides. Displays a depolymerase activity that specifically degrades the K5-type polysaccharides of Escherichia coli capsule. The C-terminal chaperone protein mediates homotrimerization and proper folding of the catalytic trimer. The polypeptide is Tail spike protein (kflA) (Escherichia virus K5 (Bacteriophage K5)).